The primary structure comprises 167 residues: Peptide deformylase (167 aa).

Cysteine 91 and histidine 133 together coordinate Fe cation. Glutamate 134 is a catalytic residue. Fe cation is bound at residue histidine 137.

Belongs to the polypeptide deformylase family. Requires Fe(2+) as cofactor.

The enzyme catalyses N-terminal N-formyl-L-methionyl-[peptide] + H2O = N-terminal L-methionyl-[peptide] + formate. Its function is as follows. Removes the formyl group from the N-terminal Met of newly synthesized proteins. Requires at least a dipeptide for an efficient rate of reaction. N-terminal L-methionine is a prerequisite for activity but the enzyme has broad specificity at other positions. The polypeptide is Peptide deformylase (Pseudoalteromonas translucida (strain TAC 125)).